Here is a 100-residue protein sequence, read N- to C-terminus: Replication restart protein PriB (100 aa).

Residues 1 to 100 (MTNRMELSGT…VLHADDIIHI (100 aa)) enclose the SSB domain.

It belongs to the PriB family. Homodimer. Interacts with PriA and DnaT. Component of the replication restart primosome. Primosome assembly occurs via a 'hand-off' mechanism. PriA binds to replication forks, subsequently PriB then DnaT bind; DnaT then displaces ssDNA to generate the helicase loading substrate.

In terms of biological role, involved in the restart of stalled replication forks, which reloads the replicative helicase on sites other than the origin of replication; the PriA-PriB pathway is the major replication restart pathway. During primosome assembly it facilitates complex formation between PriA and DnaT on DNA; stabilizes PriA on DNA. Stimulates the DNA unwinding activity of PriA helicase. In Vibrio vulnificus (strain CMCP6), this protein is Replication restart protein PriB.